The sequence spans 135 residues: Beta/delta-urticatoxin-Ui2a (135 aa).

A signal peptide spans 1–18; sequence MGAIVLVAIMALVASSSA. A propeptide spanning residues 19–72 is cleaved from the precursor; sequence FSDDEQNMMNAEGEKGIRSYSAADDVSDMIESLFVNSGNRNLVLMMLSGRPQPN. 6 disulfide bridges follow: Cys75–Cys92, Cys82–Cys97, Cys91–Cys105, Cys107–Cys121, Cys114–Cys126, and Cys120–Cys134.

It belongs to the urticatoxin-2 family. In terms of tissue distribution, expressed in trichomes, that are stiff epidermal hairs located on the surface of petioles and leaves.

It is found in the secreted. In terms of biological role, plant defense neurotoxin that causes pain and systemic symptoms in mammals via modulation of voltage-gated sodium channels (Nav). Potent modulator of human Nav1.5/SCN5A (EC(50)=55 nM), Nav1.6/SCN8A (EC(50)=0.86 nM), and Nav1.7/SCN9A (EC(50)=208 nM), where it shifts the activation threshold to more negative potentials and delays fast inactivation. Also shifts the voltage-dependence of steady-state fast inactivation of Nav1.6/SCN8A, but not that of Nav1.5/SCN5A or Nav1.7/SCN9A. On Nav1.7/SCN9A, principally acts by binding to extracellular loops of domain IV (Nav site 3). In vivo, intraplantar injection into mice causes numerous dose-dependent, immediate, and long-lasting spontaneous pain behaviors, while no swelling is observed in the injected paw. At the highest doses tested, systemic symptoms including hypokinesia and hypersalivation are observed. The protein is Beta/delta-urticatoxin-Ui2a of Urtica incisa (Scrub nettle).